The primary structure comprises 409 residues: Peptidase T (409 aa).

Histidine 78 contributes to the Zn(2+) binding site. Aspartate 80 is a catalytic residue. Aspartate 140 is a binding site for Zn(2+). Glutamate 174 (proton acceptor) is an active-site residue. Positions 175, 197, and 379 each coordinate Zn(2+).

It belongs to the peptidase M20B family. Requires Zn(2+) as cofactor.

The protein resides in the cytoplasm. It catalyses the reaction Release of the N-terminal residue from a tripeptide.. Functionally, cleaves the N-terminal amino acid of tripeptides. This chain is Peptidase T, found in Vibrio parahaemolyticus serotype O3:K6 (strain RIMD 2210633).